Consider the following 951-residue polypeptide: Valine--tRNA ligase (951 aa).

A 'HIGH' region motif is present at residues Pro40–His50. The 'KMSKS' region signature appears at Lys551–Ser555. An ATP-binding site is contributed by Lys554. Positions Met879–Ser950 form a coiled coil.

The protein belongs to the class-I aminoacyl-tRNA synthetase family. ValS type 1 subfamily. Monomer.

The protein resides in the cytoplasm. It catalyses the reaction tRNA(Val) + L-valine + ATP = L-valyl-tRNA(Val) + AMP + diphosphate. Functionally, catalyzes the attachment of valine to tRNA(Val). As ValRS can inadvertently accommodate and process structurally similar amino acids such as threonine, to avoid such errors, it has a 'posttransfer' editing activity that hydrolyzes mischarged Thr-tRNA(Val) in a tRNA-dependent manner. This Pseudoalteromonas translucida (strain TAC 125) protein is Valine--tRNA ligase.